Reading from the N-terminus, the 127-residue chain is Major sperm protein 2 (127 aa).

Position 2 is an N-acetylalanine (alanine 2). Residues 9–126 (DIHTQPGSKI…RRKNLPIEYN (118 aa)) form the MSP domain.

In terms of tissue distribution, sperm.

The protein resides in the cell projection. The protein localises to the pseudopodium. It localises to the cytoplasm. It is found in the cytoskeleton. Its function is as follows. Central component in molecular interactions underlying sperm crawling. Forms an extensive filament system that extends from sperm villipoda, along the leading edge of the pseudopod. In Onchocerca volvulus, this protein is Major sperm protein 2.